The chain runs to 178 residues: Large ribosomal subunit protein uL6 (178 aa).

Belongs to the universal ribosomal protein uL6 family. Part of the 50S ribosomal subunit.

In terms of biological role, this protein binds to the 23S rRNA, and is important in its secondary structure. It is located near the subunit interface in the base of the L7/L12 stalk, and near the tRNA binding site of the peptidyltransferase center. The sequence is that of Large ribosomal subunit protein uL6 from Streptococcus agalactiae serotype V (strain ATCC BAA-611 / 2603 V/R).